Consider the following 177-residue polypeptide: Large ribosomal subunit protein uL6 (177 aa).

The protein belongs to the universal ribosomal protein uL6 family. In terms of assembly, part of the 50S ribosomal subunit.

This protein binds to the 23S rRNA, and is important in its secondary structure. It is located near the subunit interface in the base of the L7/L12 stalk, and near the tRNA binding site of the peptidyltransferase center. The chain is Large ribosomal subunit protein uL6 from Rickettsia canadensis (strain McKiel).